Reading from the N-terminus, the 181-residue chain is Oligoribonuclease (181 aa).

In terms of domain architecture, Exonuclease spans 8–171 (LIWIDMEMTG…ADIYDSIEEL (164 aa)). Tyrosine 129 is a catalytic residue.

It belongs to the oligoribonuclease family.

It is found in the cytoplasm. Its function is as follows. 3'-to-5' exoribonuclease specific for small oligoribonucleotides. The chain is Oligoribonuclease from Nitrosomonas eutropha (strain DSM 101675 / C91 / Nm57).